A 119-amino-acid chain; its full sequence is Large ribosomal subunit protein bL20 (119 aa).

This sequence belongs to the bacterial ribosomal protein bL20 family.

In terms of biological role, binds directly to 23S ribosomal RNA and is necessary for the in vitro assembly process of the 50S ribosomal subunit. It is not involved in the protein synthesizing functions of that subunit. The sequence is that of Large ribosomal subunit protein bL20 from Alkaliphilus metalliredigens (strain QYMF).